A 426-amino-acid chain; its full sequence is Inositol hexakisphosphate kinase 2 (426 aa).

Residues 207-209 and D220 each bind ATP; that span reads ENL. Substrate is bound by residues K222 and 236–243; that span reads KAANQIRK. D383 serves as a coordination point for ATP. A substrate-binding site is contributed by H386.

Belongs to the inositol phosphokinase (IPK) family.

Its subcellular location is the nucleus. It catalyses the reaction 1D-myo-inositol hexakisphosphate + ATP = 5-diphospho-1D-myo-inositol 1,2,3,4,6-pentakisphosphate + ADP. The protein operates within phospholipid metabolism; phosphatidylinositol metabolism. With respect to regulation, inhibited by flavonoids, including myricetin, quercetin, luteolin, isorhamnetin, rhamnetin, kaempferol, diosmetin and apigenin. Converts inositol hexakisphosphate (InsP6) to diphosphoinositol pentakisphosphate (InsP7/PP-InsP5). The sequence is that of Inositol hexakisphosphate kinase 2 from Homo sapiens (Human).